We begin with the raw amino-acid sequence, 207 residues long: Guanylate kinase (207 aa).

Positions 4 to 184 (GILFIISAPS…AINDLRTIII (181 aa)) constitute a Guanylate kinase-like domain. Residue 11–18 (APSGTGKS) coordinates ATP.

The protein belongs to the guanylate kinase family.

The protein localises to the cytoplasm. It carries out the reaction GMP + ATP = GDP + ADP. Essential for recycling GMP and indirectly, cGMP. This is Guanylate kinase from Buchnera aphidicola subsp. Schizaphis graminum (strain Sg).